The sequence spans 94 residues: Small ribosomal subunit protein uS19 (94 aa).

Belongs to the universal ribosomal protein uS19 family.

Its function is as follows. Protein S19 forms a complex with S13 that binds strongly to the 16S ribosomal RNA. In Hamiltonella defensa subsp. Acyrthosiphon pisum (strain 5AT), this protein is Small ribosomal subunit protein uS19.